The following is a 444-amino-acid chain: Argininosuccinate synthase (444 aa).

ATP-binding positions include 18-26 (AFSGGLDTS) and Ala44. Tyr100 contributes to the L-citrulline binding site. ATP is bound by residues Gly130 and Thr132. Positions 132, 136, and 137 each coordinate L-aspartate. An L-citrulline-binding site is contributed by Asn136. Asp137 serves as a coordination point for ATP. Residues Arg140 and Ser193 each coordinate L-citrulline. An ATP-binding site is contributed by Asp195. L-citrulline-binding residues include Thr202, Glu204, and Glu281.

The protein belongs to the argininosuccinate synthase family. Type 2 subfamily. Homotetramer.

The protein resides in the cytoplasm. It carries out the reaction L-citrulline + L-aspartate + ATP = 2-(N(omega)-L-arginino)succinate + AMP + diphosphate + H(+). It participates in amino-acid biosynthesis; L-arginine biosynthesis; L-arginine from L-ornithine and carbamoyl phosphate: step 2/3. The chain is Argininosuccinate synthase from Mannheimia succiniciproducens (strain KCTC 0769BP / MBEL55E).